A 558-amino-acid chain; its full sequence is Potassium-transporting ATPase potassium-binding subunit 2 (558 aa).

A run of 12 helical transmembrane segments spans residues 1–21 (MSIV…SRYL), 60–80 (IKHF…LLLI), 129–149 (VITF…IAML), 169–189 (FIVR…ISQG), 246–266 (WSNY…VFLF), 281–301 (IMIF…CLYF), 326–346 (FGIG…TGTV), 353–373 (LTPL…VFGG), 376–396 (VGLM…SLMI), 415–435 (IALS…LAFI), 485–505 (IVML…VSSL), and 523–543 (LFFS…TFLP).

This sequence belongs to the KdpA family. As to quaternary structure, the system is composed of three essential subunits: KdpA, KdpB and KdpC.

The protein localises to the cell membrane. Functionally, part of the high-affinity ATP-driven potassium transport (or Kdp) system, which catalyzes the hydrolysis of ATP coupled with the electrogenic transport of potassium into the cytoplasm. This subunit binds the extracellular potassium ions and delivers the ions to the membrane domain of KdpB through an intramembrane tunnel. This is Potassium-transporting ATPase potassium-binding subunit 2 from Staphylococcus aureus (strain Mu50 / ATCC 700699).